Consider the following 343-residue polypeptide: GTPase Obg (343 aa).

Positions 1-159 (MKFIDEVKIQ…FELRLELRVL (159 aa)) constitute an Obg domain. Residues 160–334 (ADVGLLGLPN…LIYAIMGHLQ (175 aa)) enclose the OBG-type G domain. GTP-binding positions include 166 to 173 (GLPNAGKS), 191 to 195 (FTTLY), 213 to 216 (DIPG), 284 to 287 (NKVD), and 315 to 317 (SAL). Mg(2+)-binding residues include Ser173 and Thr193.

Belongs to the TRAFAC class OBG-HflX-like GTPase superfamily. OBG GTPase family. Monomer. Mg(2+) is required as a cofactor.

The protein localises to the cytoplasm. In terms of biological role, an essential GTPase which binds GTP, GDP and possibly (p)ppGpp with moderate affinity, with high nucleotide exchange rates and a fairly low GTP hydrolysis rate. Plays a role in control of the cell cycle, stress response, ribosome biogenesis and in those bacteria that undergo differentiation, in morphogenesis control. This is GTPase Obg from Nitrosomonas europaea (strain ATCC 19718 / CIP 103999 / KCTC 2705 / NBRC 14298).